A 280-amino-acid polypeptide reads, in one-letter code: Dopamine receptor-interacting protein 1 (280 aa).

Interacts with DRD1, the dopamine D1 receptor.

Functionally, could be a regulator of the dopamine receptor signaling pathway. The polypeptide is Dopamine receptor-interacting protein 1 (DORIP1) (Bos taurus (Bovine)).